We begin with the raw amino-acid sequence, 178 residues long: 3-isopropylmalate dehydratase small subunit (178 aa).

Belongs to the LeuD family. LeuD type 1 subfamily. In terms of assembly, heterodimer of LeuC and LeuD.

It carries out the reaction (2R,3S)-3-isopropylmalate = (2S)-2-isopropylmalate. It functions in the pathway amino-acid biosynthesis; L-leucine biosynthesis; L-leucine from 3-methyl-2-oxobutanoate: step 2/4. In terms of biological role, catalyzes the isomerization between 2-isopropylmalate and 3-isopropylmalate, via the formation of 2-isopropylmaleate. The protein is 3-isopropylmalate dehydratase small subunit (leuD) of Paenibacillus polymyxa (Bacillus polymyxa).